Reading from the N-terminus, the 167-residue chain is Ribosome maturation factor RimM (167 aa).

Residues Glu94–Leu165 enclose the PRC barrel domain.

Belongs to the RimM family. As to quaternary structure, binds ribosomal protein uS19.

It localises to the cytoplasm. Functionally, an accessory protein needed during the final step in the assembly of 30S ribosomal subunit, possibly for assembly of the head region. Essential for efficient processing of 16S rRNA. May be needed both before and after RbfA during the maturation of 16S rRNA. It has affinity for free ribosomal 30S subunits but not for 70S ribosomes. The polypeptide is Ribosome maturation factor RimM (Staphylococcus aureus (strain NCTC 8325 / PS 47)).